The sequence spans 203 residues: High-molecular weight cobalt-containing nitrile hydratase subunit alpha (203 aa).

4 residues coordinate Co(3+): Cys102, Cys105, Ser106, and Cys107.

The protein belongs to the nitrile hydratase subunit alpha family. In terms of assembly, heterodimer of an alpha and a beta chain. Co(3+) is required as a cofactor.

The catalysed reaction is an aliphatic primary amide = an aliphatic nitrile + H2O. Functionally, NHase catalyzes the hydration of various nitrile compounds to the corresponding amides. The polypeptide is High-molecular weight cobalt-containing nitrile hydratase subunit alpha (nhhA) (Rhodococcus rhodochrous).